We begin with the raw amino-acid sequence, 309 residues long: Malonyl CoA-acyl carrier protein transacylase (309 aa).

Active-site residues include Ser92 and His201.

The protein belongs to the FabD family.

The enzyme catalyses holo-[ACP] + malonyl-CoA = malonyl-[ACP] + CoA. It functions in the pathway lipid metabolism; fatty acid biosynthesis. The sequence is that of Malonyl CoA-acyl carrier protein transacylase (fabD) from Salmonella typhimurium (strain LT2 / SGSC1412 / ATCC 700720).